The following is a 300-amino-acid chain: Ribosomal protein L11 methyltransferase (300 aa).

Residues threonine 152, glycine 173, aspartate 195, and asparagine 234 each contribute to the S-adenosyl-L-methionine site.

Belongs to the methyltransferase superfamily. PrmA family.

The protein localises to the cytoplasm. The enzyme catalyses L-lysyl-[protein] + 3 S-adenosyl-L-methionine = N(6),N(6),N(6)-trimethyl-L-lysyl-[protein] + 3 S-adenosyl-L-homocysteine + 3 H(+). Methylates ribosomal protein L11. The polypeptide is Ribosomal protein L11 methyltransferase (Burkholderia mallei (strain NCTC 10247)).